The chain runs to 573 residues: NEDD4-binding protein 3-A (573 aa).

Disordered regions lie at residues 168–216 and 382–407; these read LNTM…INSL and LRGE…EDSK. 2 stretches are compositionally biased toward polar residues: residues 184-196 and 207-216; these read QPSN…QSES and DSRQNSINSL. Residues 289 to 539 are a coiled coil; the sequence is VEDVARQLEE…KEIQSSYREM (251 aa).

It belongs to the N4BP3 family.

The protein resides in the cytoplasmic vesicle. It is found in the cell projection. Its subcellular location is the axon. It localises to the dendrite. Its function is as follows. Plays a role in axon and dendrite arborization during cranial nerve development. Also important for neural crest migration and early development of other anterior structures including eye, brain and cranial cartilage. This Xenopus laevis (African clawed frog) protein is NEDD4-binding protein 3-A.